The primary structure comprises 134 residues: ATP synthase epsilon chain (134 aa).

The protein belongs to the ATPase epsilon chain family. As to quaternary structure, F-type ATPases have 2 components, CF(1) - the catalytic core - and CF(0) - the membrane proton channel. CF(1) has five subunits: alpha(3), beta(3), gamma(1), delta(1), epsilon(1). CF(0) has three main subunits: a, b and c.

The protein resides in the cell membrane. Its function is as follows. Produces ATP from ADP in the presence of a proton gradient across the membrane. In Listeria monocytogenes serotype 4b (strain F2365), this protein is ATP synthase epsilon chain.